The primary structure comprises 578 residues: Probable arginine--tRNA ligase, mitochondrial (578 aa).

Residues 1–16 (MACGFRRSIASQLSRV) constitute a mitochondrion transit peptide. L-arginine is bound by residues 133–135 (SPN), His-144, Tyr-322, Asp-326, and Gln-350. The short motif at 133 to 144 (SPNVAKKFHVGH) is the 'HIGH' region element. Lys-568 is modified (N6-acetyllysine).

It belongs to the class-I aminoacyl-tRNA synthetase family.

Its subcellular location is the mitochondrion membrane. It catalyses the reaction tRNA(Arg) + L-arginine + ATP = L-arginyl-tRNA(Arg) + AMP + diphosphate. Its function is as follows. Catalyzes the attachment of arginine to tRNA(Arg) in a two-step reaction: arginine is first activated by ATP to form Arg-AMP and then transferred to the acceptor end of tRNA(Arg). This chain is Probable arginine--tRNA ligase, mitochondrial (RARS2), found in Bos taurus (Bovine).